The primary structure comprises 937 residues: Isoleucine--tRNA ligase (937 aa).

Positions 58–68 (PYANGSIHIGH) match the 'HIGH' region motif. Residue Glu561 coordinates L-isoleucyl-5'-AMP. The short motif at 602–606 (KMSKS) is the 'KMSKS' region element. ATP is bound at residue Lys605. The Zn(2+) site is built by Cys900, Cys903, Cys920, and Cys923.

The protein belongs to the class-I aminoacyl-tRNA synthetase family. IleS type 1 subfamily. In terms of assembly, monomer. It depends on Zn(2+) as a cofactor.

Its subcellular location is the cytoplasm. It catalyses the reaction tRNA(Ile) + L-isoleucine + ATP = L-isoleucyl-tRNA(Ile) + AMP + diphosphate. Catalyzes the attachment of isoleucine to tRNA(Ile). As IleRS can inadvertently accommodate and process structurally similar amino acids such as valine, to avoid such errors it has two additional distinct tRNA(Ile)-dependent editing activities. One activity is designated as 'pretransfer' editing and involves the hydrolysis of activated Val-AMP. The other activity is designated 'posttransfer' editing and involves deacylation of mischarged Val-tRNA(Ile). The protein is Isoleucine--tRNA ligase of Pectobacterium atrosepticum (strain SCRI 1043 / ATCC BAA-672) (Erwinia carotovora subsp. atroseptica).